The sequence spans 334 residues: N-acetyl-gamma-glutamyl-phosphate reductase (334 aa).

Residue cysteine 154 is part of the active site.

This sequence belongs to the NAGSA dehydrogenase family. Type 1 subfamily.

Its subcellular location is the cytoplasm. It carries out the reaction N-acetyl-L-glutamate 5-semialdehyde + phosphate + NADP(+) = N-acetyl-L-glutamyl 5-phosphate + NADPH + H(+). The protein operates within amino-acid biosynthesis; L-arginine biosynthesis; N(2)-acetyl-L-ornithine from L-glutamate: step 3/4. Catalyzes the NADPH-dependent reduction of N-acetyl-5-glutamyl phosphate to yield N-acetyl-L-glutamate 5-semialdehyde. The protein is N-acetyl-gamma-glutamyl-phosphate reductase of Vibrio parahaemolyticus serotype O3:K6 (strain RIMD 2210633).